The sequence spans 231 residues: Probable cell wall protein ARB_06477 (231 aa).

Positions 1 to 17 are cleaved as a signal peptide; sequence MRSVLYLLFTAVAAVAA. Residues 107 to 206 form a disordered region; that stretch reads TPSFMVDGAT…TGMPTSSGAP (100 aa). The span at 121–204 shows a compositional bias: low complexity; that stretch reads TGPTTSRTSM…SSTGMPTSSG (84 aa). A lipid anchor (GPI-anchor amidated serine) is attached at Ser203. The propeptide at 204 to 231 is removed in mature form; it reads GAPDPNGAVSLALPGGLLSIVLSLMALL.

This sequence belongs to the SRP1/TIP1 family. In terms of processing, the GPI-anchor is attached to the protein in the endoplasmic reticulum and serves to target the protein to the cell surface. There, the glucosamine-inositol phospholipid moiety is cleaved off and the GPI-modified mannoprotein is covalently attached via its lipidless GPI glycan remnant to the 1,6-beta-glucan of the outer cell wall layer.

It localises to the cell membrane. Its subcellular location is the secreted. The protein resides in the cell wall. Its function is as follows. Probable component of the cell wall. The chain is Probable cell wall protein ARB_06477 from Arthroderma benhamiae (strain ATCC MYA-4681 / CBS 112371) (Trichophyton mentagrophytes).